We begin with the raw amino-acid sequence, 299 residues long: Oxygen-dependent coproporphyrinogen-III oxidase (299 aa).

Ser-92 contributes to the substrate binding site. Residues His-96 and His-106 each coordinate a divalent metal cation. The active-site Proton donor is the His-106. 108 to 110 lines the substrate pocket; sequence NVR. Residues His-145 and His-175 each coordinate a divalent metal cation. Residues 239–274 are important for dimerization; it reads YVEFNLVYDRGTLFGLQSGGRAESILMSLPPQVRWE. A substrate-binding site is contributed by 257–259; it reads GGR.

The protein belongs to the aerobic coproporphyrinogen-III oxidase family. Homodimer. A divalent metal cation serves as cofactor.

Its subcellular location is the cytoplasm. The enzyme catalyses coproporphyrinogen III + O2 + 2 H(+) = protoporphyrinogen IX + 2 CO2 + 2 H2O. It participates in porphyrin-containing compound metabolism; protoporphyrin-IX biosynthesis; protoporphyrinogen-IX from coproporphyrinogen-III (O2 route): step 1/1. Functionally, involved in the heme biosynthesis. Catalyzes the aerobic oxidative decarboxylation of propionate groups of rings A and B of coproporphyrinogen-III to yield the vinyl groups in protoporphyrinogen-IX. The sequence is that of Oxygen-dependent coproporphyrinogen-III oxidase from Xanthomonas campestris pv. campestris (strain 8004).